A 286-amino-acid chain; its full sequence is Deleted in azoospermia-like-B (286 aa).

Residues 33 to 114 form the RRM domain; it reads NTVFVGGIDI…PAIRKICTYV (82 aa). In terms of domain architecture, DAZ spans 155–180; that stretch reads ACPYPSSPPMAIQQIPVGCQQPGYFQ.

It belongs to the RRM DAZ family. In terms of assembly, interacts with the C-terminus of pabp1 and with epabp. Prior to oocyte maturation, found in a complex with epabp and pum2 proteins and spdy1 mRNA; pum2 dissociates from the complex during maturation.

It localises to the cytoplasm. In terms of biological role, RNA-binding protein that is required for primordial germ cell (PGC) differentiation and indirectly necessary for the migration of PGCs through the endoderm. May promote meiotic cell division during spermatogenesis. Shows a preference for G- and U-rich RNAs and probably binds the 3'-UTR of target mRNAs. Stimulates the initiation of translation of mRNAs through the recruitment of poly(A)-binding proteins (PABPs). The polypeptide is Deleted in azoospermia-like-B (dazl-b) (Xenopus laevis (African clawed frog)).